The sequence spans 987 residues: Mediator of RNA polymerase II transcription subunit 24 (987 aa).

Short sequence motifs (LXXLL motif) lie at residues 128 to 132, 344 to 348, 446 to 450, 555 to 559, 786 to 790, and 855 to 859; these read LHWLL, LTPLL, LDLLL, LVALL, LPGLL, and LMRLL. Serine 860 and serine 871 each carry phosphoserine.

It belongs to the Mediator complex subunit 24 family. As to quaternary structure, component of the Mediator complex, which is composed of MED1, MED4, MED6, MED7, MED8, MED9, MED10, MED11, MED12, MED13, MED13L, MED14, MED15, MED16, MED17, MED18, MED19, MED20, MED21, MED22, MED23, MED24, MED25, MED26, MED27, MED29, MED30, MED31, CCNC, CDK8 and CDC2L6/CDK11. The MED12, MED13, CCNC and CDK8 subunits form a distinct module termed the CDK8 module. Mediator containing the CDK8 module is less active than Mediator lacking this module in supporting transcriptional activation. Individual preparations of the Mediator complex lacking one or more distinct subunits have been variously termed ARC, CRSP, DRIP, PC2, SMCC and TRAP. Interacts with AR.

The protein localises to the nucleus. Its function is as follows. Component of the Mediator complex, a coactivator involved in the regulated transcription of nearly all RNA polymerase II-dependent genes. Mediator functions as a bridge to convey information from gene-specific regulatory proteins to the basal RNA polymerase II transcription machinery. Mediator is recruited to promoters by direct interactions with regulatory proteins and serves as a scaffold for the assembly of a functional preinitiation complex with RNA polymerase II and the general transcription factors. The polypeptide is Mediator of RNA polymerase II transcription subunit 24 (Med24) (Rattus norvegicus (Rat)).